Here is a 673-residue protein sequence, read N- to C-terminus: UvrABC system protein B (673 aa).

The region spanning 26-183 (EGLEDGLAHQ…RRLAELQYTR (158 aa)) is the Helicase ATP-binding domain. Position 39 to 46 (39 to 46 (GVTGSGKT)) interacts with ATP. The Beta-hairpin signature appears at 92–115 (YYDYYQPEAYVPSSDTFIEKDASV). Residues 431 to 597 (QVDDLLSEIR…GLNKKVVDIL (167 aa)) enclose the Helicase C-terminal domain. Residues 633–668 (QQKIHELEGQMMQHAQNLEFEEAAQIRDQLHQLREL) enclose the UVR domain.

Belongs to the UvrB family. In terms of assembly, forms a heterotetramer with UvrA during the search for lesions. Interacts with UvrC in an incision complex.

The protein resides in the cytoplasm. Its function is as follows. The UvrABC repair system catalyzes the recognition and processing of DNA lesions. A damage recognition complex composed of 2 UvrA and 2 UvrB subunits scans DNA for abnormalities. Upon binding of the UvrA(2)B(2) complex to a putative damaged site, the DNA wraps around one UvrB monomer. DNA wrap is dependent on ATP binding by UvrB and probably causes local melting of the DNA helix, facilitating insertion of UvrB beta-hairpin between the DNA strands. Then UvrB probes one DNA strand for the presence of a lesion. If a lesion is found the UvrA subunits dissociate and the UvrB-DNA preincision complex is formed. This complex is subsequently bound by UvrC and the second UvrB is released. If no lesion is found, the DNA wraps around the other UvrB subunit that will check the other stand for damage. The protein is UvrABC system protein B of Klebsiella pneumoniae subsp. pneumoniae (strain ATCC 700721 / MGH 78578).